A 310-amino-acid chain; its full sequence is Endo-1,4-beta-xylanase B (310 aa).

The signal sequence occupies residues 1–19; it reads MISLSSVAIALTTVVGALA. In terms of domain architecture, GH11 spans 33 to 223; it reads AITSSQTGTN…SSGSASMTVS (191 aa). Residue glutamate 119 is the Nucleophile of the active site. The Proton donor role is filled by glutamate 210. Low complexity predominate over residues 218–227; sequence ASMTVSAGSS. The interval 218-274 is disordered; it reads ASMTVSAGSSSSGGSGSGSGSGSGSGSGSGSQTTTAGSSTGTGTGSGSGSGSGGSGG. Over residues 228-246 the composition is skewed to gly residues; that stretch reads SSGGSGSGSGSGSGSGSGS. Positions 247 to 256 are enriched in low complexity; the sequence is GSQTTTAGSS. The span at 257–274 shows a compositional bias: gly residues; sequence TGTGTGSGSGSGSGGSGG. A CBM1 domain is found at 275-310; sequence NCAAQWGQCGGQGWNGPTCCSSGTCKASNQWYSQCL.

It belongs to the glycosyl hydrolase 11 (cellulase G) family.

It localises to the secreted. The catalysed reaction is Endohydrolysis of (1-&gt;4)-beta-D-xylosidic linkages in xylans.. It participates in glycan degradation; xylan degradation. Functionally, endo-1,4-beta-xylanase involved in the hydrolysis of xylan, a major structural heterogeneous polysaccharide found in plant biomass representing the second most abundant polysaccharide in the biosphere, after cellulose. Hydrolyzes birchwood xylan, beechwood xylan, and oat spelt xylan to produce short-chain xylooligosaccharides, xylopentaose, xylotriose, and xylobiose as the main products. This Penicillium oxalicum protein is Endo-1,4-beta-xylanase B (xynB).